A 233-amino-acid chain; its full sequence is Bcl-2-like protein 1 (233 aa).

The BH4 motif lies at 4-24 (SNRELVVDFLSYKLSQKGYSW). The interval 29–71 (DVEENRTEAPEGTESEAETPSAINGNPSWHLADSPAVNGATGH) is disordered. S49 carries the post-translational modification Phosphoserine; by PLK3. Position 62 is a phosphoserine; by CDK1 (S62). The BH3 motif lies at 86 to 100 (VKQALREAGDEFELR). A BH1 motif is present at residues 129 to 148 (ELFRDGVNWGRIVAFFSFGG). The BH2 motif lies at 180–195 (PWIQENGGWDTFVELY). The chain crosses the membrane as a helical span at residues 210 to 226 (FNRWFLTGMTLAGVVLL).

This sequence belongs to the Bcl-2 family. In terms of assembly, homodimer. Heterodimers with BAX, BAK or BCL2. Heterodimerization with BAX does not seem to be required for anti-apoptotic activity. Interacts with BCL2L11. Interacts with BAD. Interacts with SIVA1 isoform 1; the interaction inhibits the anti-apoptotic activity. Interacts with BECN1 and PGAM5. Interacts with IKZF3. Interacts with HEBP2. Interacts with BOP. Interacts with p53/TP53 and BBC3; interaction with BBC3 disrupts the interaction with p53/TP53. Interacts with DNM1L and CLTA; DNM1L and BCL2L1 may form a complex in synaptic vesicles that also contains clathrin and MFF. Interacts with ATP5F1A and ATP5F1B; the interactions mediate the association of BCL2L1 with the mitochondrial membrane ATP synthase F(1)F(0) ATP synthase. Interacts with VDAC1. Interacts (via the loop between motifs BH4 and BH3) with NLRP1 (via LRR repeats), but not with NLRP2, NLRP3, NLRP4, PYCARD, nor MEFV. Interacts with BCL2L11 (via BH3). Interacts with RNF183. Interacts with GIMAP3/IAN4. Interacts with GIMAP5 and HSPA8/HSC70; the interaction between HSPA8 and BCL2L1 is impaired in the absence of GIMAP5. Interacts with CLU (isoform 4); this interaction releases and activates BAX and promotes cell death. Post-translationally, proteolytically cleaved by caspases during apoptosis. The cleaved protein, lacking the BH4 motif, has pro-apoptotic activity. Phosphorylated on Ser-62 by CDK1. This phosphorylation is partial in normal mitotic cells, but complete in G2-arrested cells upon DNA-damage, thus promoting subsequent apoptosis probably by triggering caspases-mediated proteolysis. Phosphorylated by PLK3, leading to regulate the G2 checkpoint and progression to cytokinesis during mitosis. Phosphorylation at Ser-49 appears during the S phase and G2, disappears rapidly in early mitosis during prometaphase, metaphase and early anaphase, and re-appears during telophase and cytokinesis. In terms of processing, ubiquitinated by RNF183 during prolonged ER stress, leading to degradation by the proteosome.

It is found in the mitochondrion membrane. It localises to the nucleus membrane. The protein resides in the mitochondrion matrix. Its subcellular location is the cytoplasm. The protein localises to the cytoskeleton. It is found in the microtubule organizing center. It localises to the centrosome. The protein resides in the cytosol. Its subcellular location is the cytoplasmic vesicle. The protein localises to the secretory vesicle. It is found in the synaptic vesicle membrane. Potent inhibitor of cell death. Inhibits activation of caspases. Appears to regulate cell death by blocking the voltage-dependent anion channel (VDAC) by binding to it and preventing the release of the caspase activator, CYC1, from the mitochondrial membrane. Also acts as a regulator of G2 checkpoint and progression to cytokinesis during mitosis. Regulates presynaptic plasticity, including neurotransmitter release and recovery, number of axonal mitochondria as well as size and number of synaptic vesicle clusters. During synaptic stimulation, increases ATP availability from mitochondria through regulation of mitochondrial membrane ATP synthase F(1)F(0) activity and regulates endocytic vesicle retrieval in hippocampal neurons through association with DMN1L and stimulation of its GTPase activity in synaptic vesicles. May attenuate inflammation impairing NLRP1-inflammasome activation, hence CASP1 activation and IL1B release. This is Bcl-2-like protein 1 (BCL2L1) from Sus scrofa (Pig).